A 373-amino-acid polypeptide reads, in one-letter code: Nodulation protein NolL (373 aa).

9 helical membrane passes run 27–47 (DFAK…QYLI), 62–82 (SIYM…SSGA), 98–118 (QLLL…SAVI), 140–160 (WFIW…TFNR), 164–184 (WIIS…SITP), 212–232 (RYKW…FLGW), 253–273 (QVFL…QSMF), 286–306 (RFVA…QGAV), and 324–344 (RITF…AIRS).

The protein belongs to the acyltransferase 3 family.

The protein localises to the cell membrane. Functionally, thought to be an acetyltransferase that modifies the fucose of the nod factor. This Mesorhizobium japonicum (strain LMG 29417 / CECT 9101 / MAFF 303099) (Mesorhizobium loti (strain MAFF 303099)) protein is Nodulation protein NolL (nolL).